A 528-amino-acid chain; its full sequence is MNENHIQSDHMNNTIHVTNKKLPNFLLSVRLKYVKLGYHYLISNAVYILILPVGLLAATSSSFSLTDLTLLYNHLLKFHFLSSTLFAALLIFLTTLYFTTRPRRIFLLDFACYKPDSSLICTRETFMDRSQRVGIFTEDNLAFQQKILERSGLGQKTYFPEALLRVPPNPCMSEARKEAETVMFGAIDAVLEKTGVNPKDIGILVVNCSLFNPTPSLSAMIVNKYKLRGNVLSYNLGGMGCSAGLISIDLAKQLLQVQPNSYALVVSTENITLNWYLGNDRSMLLSNCIFRMGGAAVLLSNRSSDRCRSKYQLIHTVRTHKGSDDNAFNCVYQREDNDDNKQIGVSLSKNLMAIAGEALKTNITTLGPLVLPMSEQLLFFATLVARKVFNVKKIKPYIPDFKLAFEHFCIHAGGRAVLDEIEKNLDLSEWHMEPSRMTLNRFGNTSSSSLWYELAYSEAKGRIKRGDRTWQIAFGSGFKCNSAVWRALRTIDPSKEKKKKTNPWIDEIHEFPVPVPRTSPVTSSSESR.

The next 2 helical transmembrane spans lie at 36-56 (LGYHYLISNAVYILILPVGLL) and 78-98 (FHFLSSTLFAALLIFLTTLYF). In terms of domain architecture, FAE spans 97 to 388 (YFTTRPRRIF…FFATLVARKV (292 aa)). Residues Cys241, His320, His407, His411, and Asn444 contribute to the active site.

The protein belongs to the thiolase-like superfamily. Chalcone/stilbene synthases family. Expressed in siliques, flowers and stems. In young seedlings, expressed in the central cylinder of primary roots, in emerging lateral roots and in their root cap, but not in aboveground tissues such as hypocotyls, cotyledons and leaves. Expressed in sepals in mature flowers and in the chalaza and micropyle region of developing seeds shortly prior to or just after the detachment from the funiculus. Expressed in roots, flowers, cauline leaves and siliques.

Its subcellular location is the membrane. The catalysed reaction is a very-long-chain acyl-CoA + malonyl-CoA + H(+) = a very-long-chain 3-oxoacyl-CoA + CO2 + CoA. It participates in lipid metabolism; fatty acid biosynthesis. Inhibited by K3 herbicides such as allidochlor, anilofos, cafenstrole and flufenacet. Strongly inhibited by metazachlor. In terms of biological role, mediates the synthesis of VLCFAs from 22 to 26 carbons in length (e.g. C22, C24, C26). Involved in the elongation of C20 fatty acid suberin precursors. Functionally redundant with KCS20 in the two-carbon elongation of C22 fatty acids that is required for cuticular wax and root suberin biosynthesis. The sequence is that of 3-ketoacyl-CoA synthase 2 from Arabidopsis thaliana (Mouse-ear cress).